The following is a 272-amino-acid chain: Tryptophan synthase alpha chain (272 aa).

Active-site proton acceptor residues include Glu49 and Glu60.

This sequence belongs to the TrpA family. Tetramer of two alpha and two beta chains.

It carries out the reaction (1S,2R)-1-C-(indol-3-yl)glycerol 3-phosphate + L-serine = D-glyceraldehyde 3-phosphate + L-tryptophan + H2O. Its pathway is amino-acid biosynthesis; L-tryptophan biosynthesis; L-tryptophan from chorismate: step 5/5. The alpha subunit is responsible for the aldol cleavage of indoleglycerol phosphate to indole and glyceraldehyde 3-phosphate. The polypeptide is Tryptophan synthase alpha chain (Legionella pneumophila (strain Lens)).